The primary structure comprises 190 residues: Probable nicotinate-nucleotide adenylyltransferase (190 aa).

The protein belongs to the NadD family.

It catalyses the reaction nicotinate beta-D-ribonucleotide + ATP + H(+) = deamido-NAD(+) + diphosphate. It functions in the pathway cofactor biosynthesis; NAD(+) biosynthesis; deamido-NAD(+) from nicotinate D-ribonucleotide: step 1/1. Catalyzes the reversible adenylation of nicotinate mononucleotide (NaMN) to nicotinic acid adenine dinucleotide (NaAD). The chain is Probable nicotinate-nucleotide adenylyltransferase from Staphylococcus saprophyticus subsp. saprophyticus (strain ATCC 15305 / DSM 20229 / NCIMB 8711 / NCTC 7292 / S-41).